Reading from the N-terminus, the 582-residue chain is Isopropyl malate synthase AMT7 (582 aa).

The region spanning Pro61 to Asp341 is the Pyruvate carboxyltransferase domain.

The protein belongs to the alpha-IPM synthase/homocitrate synthase family. LeuA type 2 subfamily.

It carries out the reaction 3-methyl-2-oxobutanoate + acetyl-CoA + H2O = (2S)-2-isopropylmalate + CoA + H(+). It functions in the pathway mycotoxin biosynthesis. Its function is as follows. Isopropyl malate synthase; part of the gene clusters that mediate the biosynthesis of AM-toxins, host-selective toxins (HSTs) causing Alternaria blotch on apple, a worldwide distributed disease. AM-toxins are cyclic depsipeptides containing the 3 residues 2-hydroxy-isovaleric acid (2-HIV), dehydroalanine, L-alanine which are common for all 3 AM-toxins I to III. The fourth precursor is L-alpha-amino-methoxyphenyl-valeric acid (L-Amv) for AM-toxin I, L-alpha-amino-phenyl-valeric acid (L-Apv) for AM-toxin II, and L-alpha-amino-hydroxyphenyl-valeric acid (L-Ahv) for AM-toxin III. AM-toxins have two target sites for affecting susceptible apple cells; they cause invagination of the plasma membrane and electrolyte loss and chloroplast disorganization. The non-ribosomal peptide synthetase AMT1 contains 4 catalytic modules and is responsible for activation of each residue in AM-toxin. The aldo-keto reductase AMT2 catalyzes the conversion of 2-keto-isovaleric acid (2-KIV) to 2-hydroxy-isovaleric acid (2-HIV), one of the precursor residues incorporated by AMT1 during AM-toxin biosynthesis, by reduction of its ketone to an alcohol. The cytochrome P450 monooxygenase AMT3 and the thioesterase AMT4 are also important for AM-toxin production, but their exact function within the AM-toxin biosynthesis are not known yet. Up to 21 proteins (including AMT1 to AMT4) are predicted to be involved in AM-toxin biosynthesis since their expression ishighly up-regulated in AM-toxin-producing cultures. This chain is Isopropyl malate synthase AMT7, found in Alternaria alternata (Alternaria rot fungus).